A 94-amino-acid chain; its full sequence is Translation initiation factor IF-1 (94 aa).

An S1-like domain is found at M1–K72. Residues H71–R94 form a disordered region. A compositionally biased stretch (low complexity) spans P82 to R94.

Belongs to the IF-1 family. In terms of assembly, component of the 30S ribosomal translation pre-initiation complex which assembles on the 30S ribosome in the order IF-2 and IF-3, IF-1 and N-formylmethionyl-tRNA(fMet); mRNA recruitment can occur at any time during PIC assembly.

The protein localises to the cytoplasm. Its function is as follows. One of the essential components for the initiation of protein synthesis. Stabilizes the binding of IF-2 and IF-3 on the 30S subunit to which N-formylmethionyl-tRNA(fMet) subsequently binds. Helps modulate mRNA selection, yielding the 30S pre-initiation complex (PIC). Upon addition of the 50S ribosomal subunit IF-1, IF-2 and IF-3 are released leaving the mature 70S translation initiation complex. The protein is Translation initiation factor IF-1 of Rhodopseudomonas palustris (strain BisB5).